The chain runs to 342 residues: N-acetyl-gamma-glutamyl-phosphate reductase (342 aa).

C149 is a catalytic residue.

Belongs to the NAGSA dehydrogenase family. Type 1 subfamily.

The protein resides in the cytoplasm. It carries out the reaction N-acetyl-L-glutamate 5-semialdehyde + phosphate + NADP(+) = N-acetyl-L-glutamyl 5-phosphate + NADPH + H(+). Its pathway is amino-acid biosynthesis; L-arginine biosynthesis; N(2)-acetyl-L-ornithine from L-glutamate: step 3/4. In terms of biological role, catalyzes the NADPH-dependent reduction of N-acetyl-5-glutamyl phosphate to yield N-acetyl-L-glutamate 5-semialdehyde. The sequence is that of N-acetyl-gamma-glutamyl-phosphate reductase from Paracoccus denitrificans (strain Pd 1222).